The chain runs to 442 residues: Adenylosuccinate synthetase (442 aa).

Residues 25 to 31 (GDEGKGK), 53 to 55 (GHT), and Lys62 contribute to the GTP site. Asp26 serves as the catalytic Proton acceptor. Residues Asp26 and Gly53 each coordinate Mg(2+). Residues 26-29 (DEGK) and 51-54 (NAGH) contribute to the IMP site. His54 functions as the Proton donor in the catalytic mechanism. Residues Thr141, Arg155, Asn232, and Thr247 each coordinate IMP. A GTP-binding site is contributed by Thr307. 307-313 (TTTKRPR) contacts substrate. Arg311 contributes to the IMP binding site. Residues Arg313, 339-341 (KLD), and 425-427 (GVG) contribute to the GTP site.

This sequence belongs to the adenylosuccinate synthetase family. Homodimer. It depends on Mg(2+) as a cofactor.

It localises to the cytoplasm. The enzyme catalyses IMP + L-aspartate + GTP = N(6)-(1,2-dicarboxyethyl)-AMP + GDP + phosphate + 2 H(+). The protein operates within purine metabolism; AMP biosynthesis via de novo pathway; AMP from IMP: step 1/2. Its function is as follows. Plays an important role in the salvage pathway for purine nucleotide biosynthesis. Catalyzes the first committed step in the biosynthesis of AMP from IMP. In Plasmodium falciparum (isolate 3D7), this protein is Adenylosuccinate synthetase (Adss).